We begin with the raw amino-acid sequence, 207 residues long: Guanylate kinase (207 aa).

The Guanylate kinase-like domain occupies 17 to 197 (GRLVVLAGPS…SCDELVSLLV (181 aa)). 24–31 (GPSAVGKS) lines the ATP pocket.

It belongs to the guanylate kinase family.

The protein resides in the cytoplasm. It carries out the reaction GMP + ATP = GDP + ADP. Essential for recycling GMP and indirectly, cGMP. This chain is Guanylate kinase, found in Rhodococcus jostii (strain RHA1).